The chain runs to 529 residues: L-ornithine N(5)-monooxygenase (529 aa).

FAD contacts are provided by residues E100–H108 and Q119. K124 lines the substrate pocket. V185 contacts FAD. N270–S273 contacts NADP(+). Residues N309–F312 and N339 contribute to the substrate site. N339–G341 serves as a coordination point for NADP(+). Residue T493 to L495 coordinates FAD. S496 provides a ligand contact to substrate.

The protein belongs to the lysine N(6)-hydroxylase/L-ornithine N(5)-oxygenase family. In terms of assembly, homotetramer. FAD is required as a cofactor.

The enzyme catalyses L-ornithine + NADPH + O2 = N(5)-hydroxy-L-ornithine + NADP(+) + H2O. It catalyses the reaction L-ornithine + NADH + O2 = N(5)-hydroxy-L-ornithine + NAD(+) + H2O. It functions in the pathway siderophore biosynthesis. Its function is as follows. L-ornithine N(5)-monooxygenase; part of the gene cluster that mediates the biosynthesis of hydroxamate-containing siderophores that play a critical role in virulence. Cochliobolus heterostrophus produces extracellular coprogen-type siderophores including coprogen, neocoprogen I and neocoprogen II, as well as the intracellular siderophore ferricrocin. The role of extracellular siderophores is to supply iron to their producers in planta and the intracellular ferricrocin is required for intracellular iron distribution and storage with a crucial role in ascus and ascospore development. SIDA2 catalyzes the conversion of L-ornithine to N(5)-hydroxyornithine, the first step in the biosynthesis of all hydroxamate-containing siderophores. The assembly of extracellular coprogen-type siderophores is then performed by the nonribosomal peptide synthetase (NRPS) NPS6 whereas the intracellular siderophore ferricrocin is assembled by NPS2. The sequence is that of L-ornithine N(5)-monooxygenase from Cochliobolus heterostrophus (strain C4 / ATCC 48331 / race T) (Southern corn leaf blight fungus).